A 346-amino-acid chain; its full sequence is G-protein coupled receptor homolog U12 (346 aa).

Residues 1–31 (MICYSFAKNVTFAFLIILQNFFSQHDEEYKY) are Extracellular-facing. A helical membrane pass occupies residues 32 to 56 (NYTCITPTVRKAQRLESVINGIMLT). The Cytoplasmic portion of the chain corresponds to 57–83 (LILPVSTVVICTLLIYYKWTKQTITSP). The chain crosses the membrane as a helical span at residues 84-108 (YLITLFISDSLHSLTVLLLTLNREA). The Extracellular portion of the chain corresponds to 109 to 115 (LTNLNQA). Residues 116–142 (LCQCVLFVYSASCTYSLCMLAVISTIR) traverse the membrane as a helical segment. Over 143-159 (YRTLQRRTLNDKNNNHI) the chain is Cytoplasmic. Residues 160 to 181 (KRNVGILFLSSAMCAIPAVLYV) traverse the membrane as a helical segment. Topologically, residues 182–208 (QVEKKKGNYGKCNIHISTQKAYDLFIG) are extracellular. Residues 209 to 229 (IKIVYCFLWGIFPTVIFSYFY) form a helical membrane-spanning segment. Over 230–245 (VIFGKTLRALTQSKHN) the chain is Cytoplasmic. A helical membrane pass occupies residues 246 to 272 (KTLSFISLLILSFLCIQIPNLLVMSVE). The Extracellular portion of the chain corresponds to 273-286 (IFFLYIANTSCLGT). Residues 287–310 (IQREIVQIISRLMPEIHCLSNPLV) form a helical membrane-spanning segment. Residues 311 to 346 (YAFTRTDFRLRFYDFIKCNLCNSSLKRKRNPLTIKN) are Cytoplasmic-facing.

It belongs to the G-protein coupled receptor 1 family.

The protein resides in the host cell membrane. The sequence is that of G-protein coupled receptor homolog U12 (U12) from Homo sapiens (Human).